The sequence spans 186 residues: Peptidyl-tRNA hydrolase (186 aa).

Y14 is a binding site for tRNA. H19 (proton acceptor) is an active-site residue. TRNA is bound by residues Y61, N63, and N107.

It belongs to the PTH family. Monomer.

It localises to the cytoplasm. It catalyses the reaction an N-acyl-L-alpha-aminoacyl-tRNA + H2O = an N-acyl-L-amino acid + a tRNA + H(+). Hydrolyzes ribosome-free peptidyl-tRNAs (with 1 or more amino acids incorporated), which drop off the ribosome during protein synthesis, or as a result of ribosome stalling. Functionally, catalyzes the release of premature peptidyl moieties from peptidyl-tRNA molecules trapped in stalled 50S ribosomal subunits, and thus maintains levels of free tRNAs and 50S ribosomes. This is Peptidyl-tRNA hydrolase from Helicobacter pylori (strain HPAG1).